Here is a 69-residue protein sequence, read N- to C-terminus: Large ribosomal subunit protein bL31 (69 aa).

4 residues coordinate Zn(2+): C17, C19, C37, and C40.

The protein belongs to the bacterial ribosomal protein bL31 family. Type A subfamily. As to quaternary structure, part of the 50S ribosomal subunit. Zn(2+) is required as a cofactor.

Functionally, binds the 23S rRNA. The polypeptide is Large ribosomal subunit protein bL31 (Thermoanaerobacter pseudethanolicus (strain ATCC 33223 / 39E) (Clostridium thermohydrosulfuricum)).